The primary structure comprises 68 residues: Alpha-conotoxin-like Lt1.2 (68 aa).

An N-terminal signal peptide occupies residues 1–21 (MGMRMMFIMFMLVVLATTVDT). Positions 22–48 (FTSDRALDAMNAAASNKASRLIALAVR) are excised as a propeptide. Intrachain disulfides connect Cys50–Cys56 and Cys51–Cys64. The lacks the Ser-Xaa-Pro motif that is crucial for potent interaction with nAChR stretch occupies residues 52-54 (ARA). Gly65 carries the glycine amide modification.

The protein belongs to the conotoxin A superfamily. Expressed by the venom duct.

The protein resides in the secreted. Alpha-conotoxins act on postsynaptic membranes, they bind to the nicotinic acetylcholine receptors (nAChR) and thus inhibit them. Has a distinct nAChR binding mode from other alpha-conotoxins, due to a different three residue motif (Ala-Xaa-Ala instead of the conserved Ser-Xaa-Pro motif). In Conus litteratus (Lettered cone), this protein is Alpha-conotoxin-like Lt1.2.